Here is a 72-residue protein sequence, read N- to C-terminus: Translation initiation factor IF-1 (72 aa).

The region spanning 1–72 (MAKEEAIEIE…TKGRITYRYK (72 aa)) is the S1-like domain.

It belongs to the IF-1 family. Component of the 30S ribosomal translation pre-initiation complex which assembles on the 30S ribosome in the order IF-2 and IF-3, IF-1 and N-formylmethionyl-tRNA(fMet); mRNA recruitment can occur at any time during PIC assembly.

The protein localises to the cytoplasm. Its function is as follows. One of the essential components for the initiation of protein synthesis. Stabilizes the binding of IF-2 and IF-3 on the 30S subunit to which N-formylmethionyl-tRNA(fMet) subsequently binds. Helps modulate mRNA selection, yielding the 30S pre-initiation complex (PIC). Upon addition of the 50S ribosomal subunit IF-1, IF-2 and IF-3 are released leaving the mature 70S translation initiation complex. The protein is Translation initiation factor IF-1 of Chlorobium phaeobacteroides (strain DSM 266 / SMG 266 / 2430).